A 352-amino-acid chain; its full sequence is DNA polymerase IV (352 aa).

One can recognise a UmuC domain in the interval 4-185; that stretch reads IIHVDMDCFY…LPLEKIPGVG (182 aa). Residues Asp-8 and Asp-103 each contribute to the Mg(2+) site. Glu-104 is a catalytic residue.

This sequence belongs to the DNA polymerase type-Y family. Monomer. Mg(2+) serves as cofactor.

It is found in the cytoplasm. It carries out the reaction DNA(n) + a 2'-deoxyribonucleoside 5'-triphosphate = DNA(n+1) + diphosphate. Poorly processive, error-prone DNA polymerase involved in untargeted mutagenesis. Copies undamaged DNA at stalled replication forks, which arise in vivo from mismatched or misaligned primer ends. These misaligned primers can be extended by PolIV. Exhibits no 3'-5' exonuclease (proofreading) activity. May be involved in translesional synthesis, in conjunction with the beta clamp from PolIII. The polypeptide is DNA polymerase IV (Pectobacterium atrosepticum (strain SCRI 1043 / ATCC BAA-672) (Erwinia carotovora subsp. atroseptica)).